A 618-amino-acid polypeptide reads, in one-letter code: NAD(P)H-quinone oxidoreductase subunit 5, organellar chromatophore 2 (618 aa).

17 helical membrane-spanning segments follow: residues 16-36 (LIPI…TGWI), 43-63 (TPAY…SLAL), 99-119 (LAAL…ALGY), 129-149 (FFAL…SDSL), 152-172 (SYFL…FWYA), 190-210 (GDVM…GMEF), 220-240 (NTLT…GPIG), 267-287 (SVVV…LHHS), 291-311 (IAVL…VSIA), 318-335 (TLSY…IAIA), 348-368 (AHAI…AVSN), 390-410 (LIAG…CFGL), 419-438 (APWF…LNLT), 461-481 (WQMA…PWMM), 495-515 (AITG…GAIV), 553-573 (IVSG…NGFV), and 597-617 (SYIL…SWLV).

It belongs to the complex I subunit 5 family. In terms of assembly, NDH is composed of at least 16 different subunits, 5 of which are encoded in the nucleus.

The protein resides in the plastid. The protein localises to the organellar chromatophore thylakoid membrane. The enzyme catalyses a plastoquinone + NADH + (n+1) H(+)(in) = a plastoquinol + NAD(+) + n H(+)(out). It catalyses the reaction a plastoquinone + NADPH + (n+1) H(+)(in) = a plastoquinol + NADP(+) + n H(+)(out). Its function is as follows. NDH shuttles electrons from NAD(P)H:plastoquinone, via FMN and iron-sulfur (Fe-S) centers, to quinones in the photosynthetic chain and possibly in a chloroplast respiratory chain. The immediate electron acceptor for the enzyme in this species is believed to be plastoquinone. Couples the redox reaction to proton translocation, and thus conserves the redox energy in a proton gradient. This Paulinella chromatophora protein is NAD(P)H-quinone oxidoreductase subunit 5, organellar chromatophore 2 (ndhF2).